An 862-amino-acid polypeptide reads, in one-letter code: Valine--tRNA ligase (862 aa).

A 'HIGH' region motif is present at residues Pro43–His53. Residues Glu459–Ala494 form a disordered region. The short motif at Lys574–Ser578 is the 'KMSKS' region element. Lys577 serves as a coordination point for ATP.

It belongs to the class-I aminoacyl-tRNA synthetase family. ValS type 2 subfamily. In terms of assembly, monomer.

The protein localises to the cytoplasm. The enzyme catalyses tRNA(Val) + L-valine + ATP = L-valyl-tRNA(Val) + AMP + diphosphate. Catalyzes the attachment of valine to tRNA(Val). As ValRS can inadvertently accommodate and process structurally similar amino acids such as threonine, to avoid such errors, it has a 'posttransfer' editing activity that hydrolyzes mischarged Thr-tRNA(Val) in a tRNA-dependent manner. The protein is Valine--tRNA ligase of Salinispora arenicola (strain CNS-205).